The following is a 428-amino-acid chain: 3-phosphoshikimate 1-carboxyvinyltransferase (428 aa).

Residues Lys-21, Ser-22, and Arg-26 each contribute to the 3-phosphoshikimate site. Phosphoenolpyruvate is bound at residue Lys-21. Gly-91 and Arg-119 together coordinate phosphoenolpyruvate. 3-phosphoshikimate is bound by residues Ser-164, Gln-166, Asp-313, and Lys-340. A phosphoenolpyruvate-binding site is contributed by Gln-166. Residue Asp-313 is the Proton acceptor of the active site. Arg-344 and Arg-386 together coordinate phosphoenolpyruvate.

This sequence belongs to the EPSP synthase family. In terms of assembly, monomer.

It is found in the cytoplasm. The enzyme catalyses 3-phosphoshikimate + phosphoenolpyruvate = 5-O-(1-carboxyvinyl)-3-phosphoshikimate + phosphate. The protein operates within metabolic intermediate biosynthesis; chorismate biosynthesis; chorismate from D-erythrose 4-phosphate and phosphoenolpyruvate: step 6/7. Its function is as follows. Catalyzes the transfer of the enolpyruvyl moiety of phosphoenolpyruvate (PEP) to the 5-hydroxyl of shikimate-3-phosphate (S3P) to produce enolpyruvyl shikimate-3-phosphate and inorganic phosphate. This Campylobacter jejuni subsp. jejuni serotype O:2 (strain ATCC 700819 / NCTC 11168) protein is 3-phosphoshikimate 1-carboxyvinyltransferase.